The primary structure comprises 217 residues: Large ribosomal subunit protein uL29m (217 aa).

The protein belongs to the universal ribosomal protein uL29 family. As to quaternary structure, component of the mitochondrial large ribosomal subunit. Mature mitochondrial ribosomes consist of a small (37S) and a large (54S) subunit. The 37S subunit contains at least 33 different proteins and 1 molecule of RNA (15S). The 54S subunit contains at least 45 different proteins and 1 molecule of RNA (21S).

The protein resides in the mitochondrion. This Neosartorya fischeri (strain ATCC 1020 / DSM 3700 / CBS 544.65 / FGSC A1164 / JCM 1740 / NRRL 181 / WB 181) (Aspergillus fischerianus) protein is Large ribosomal subunit protein uL29m (mrpl4).